A 306-amino-acid chain; its full sequence is Large ribosomal subunit protein mL45 (306 aa).

It belongs to the mitochondrion-specific ribosomal protein mL45 family. Component of the mitochondrial ribosome large subunit (39S) which comprises a 16S rRNA and about 50 distinct proteins.

The protein resides in the mitochondrion. Functionally, component of the mitochondrial large ribosomal subunit (mt-LSU). Within the mitochondrial ribosomes, required to direct the nascent polypeptide toward the tunnel exit and position the exit at a distance from the membrane surface. The protein is Large ribosomal subunit protein mL45 (MRPL45) of Bos taurus (Bovine).